The chain runs to 339 residues: GTPase Obg (339 aa).

Residues 1-159 (MKFLDQAKVY…RALWLRLKLI (159 aa)) form the Obg domain. Residues 160–327 (ADGGIIGLPN…VLRSVAHVIE (168 aa)) form the OBG-type G domain. GTP contacts are provided by residues 166-173 (GLPNAGKS), 191-195 (FTTLY), 212-215 (DIPG), 279-282 (SQVD), and 308-310 (SAV). Residues Ser-173 and Thr-193 each contribute to the Mg(2+) site.

It belongs to the TRAFAC class OBG-HflX-like GTPase superfamily. OBG GTPase family. In terms of assembly, monomer. It depends on Mg(2+) as a cofactor.

The protein resides in the cytoplasm. Functionally, an essential GTPase which binds GTP, GDP and possibly (p)ppGpp with moderate affinity, with high nucleotide exchange rates and a fairly low GTP hydrolysis rate. Plays a role in control of the cell cycle, stress response, ribosome biogenesis and in those bacteria that undergo differentiation, in morphogenesis control. This Bartonella bacilliformis (strain ATCC 35685 / KC583 / Herrer 020/F12,63) protein is GTPase Obg.